We begin with the raw amino-acid sequence, 1578 residues long: Bromodomain-containing protein DDB_G0270170 (1578 aa).

Acidic residues predominate over residues 1-12; the sequence is MSLEQQDETVVE. Disordered stretches follow at residues 1 to 39, 108 to 127, 151 to 285, and 319 to 454; these read MSLE…TYKE, NNNN…NNTE, HYSD…AKEL, and NENI…TTQT. Residues 18-35 show a composition bias toward low complexity; sequence SFETNNSTANNTNNNTDN. Over residues 152–163 the composition is skewed to basic and acidic residues; the sequence is YSDDESSKEKQD. 2 stretches are compositionally biased toward low complexity: residues 164–185 and 197–231; these read NINS…SENI and TTPS…TTTN. Composition is skewed to polar residues over residues 319–332 and 340–351; these read NENI…STTK and TASTTNTPIITA. Residues 352 to 383 are compositionally biased toward low complexity; the sequence is QQNTTPLSPTQTTTTTTTPTTTTAQQNTPAQT. Over residues 384–395 the composition is skewed to polar residues; that stretch reads ESKPPTTISINI. 2 stretches are compositionally biased toward low complexity: residues 396–407 and 417–433; these read KGSKSPKTTGGK and VVIS…VATT. A compositionally biased stretch (polar residues) spans 443 to 454; the sequence is STANNNSETTQT. A coiled-coil region spans residues 479-506; that stretch reads SDSATIQQLQQSISMLEDKIRLISSNNK. 2 disordered regions span residues 543 to 565 and 580 to 730; these read FTKS…YSDD and IPIP…RMGK. 2 stretches are compositionally biased toward low complexity: residues 604–653 and 660–686; these read NTST…PPQQ and TQQE…DTTT. Residues 735–841 enclose the Bromo domain; it reads VVLTPVFKRC…DVFEKGFPKV (107 aa). Residues 851 to 903 are a coiled coil; sequence KNVDQEKIEKLSNDLKNVTKELEKFKKDDSNSINNNNNNNNNYNNNNNNNNNN. Disordered stretches follow at residues 874–969, 1039–1167, 1184–1452, and 1480–1544; these read KFKK…KVTT, HALP…NNNN, SIPE…TDSA, and EREE…KGNM. 3 stretches are compositionally biased toward low complexity: residues 881–911, 918–961, and 1047–1061; these read NSIN…SSRS, SSGS…SSNN, and SSTH…DSSS. The region spanning 957–1039 is the NET domain; the sequence is SSSNNKKYPK…QYKNGEIPQH (83 aa). Positions 1064–1077 are enriched in basic and acidic residues; that stretch reads REIEKLQKQLDRLG. Residues 1092–1107 are compositionally biased toward basic residues; sequence HSKRISKPISKARGRK. A compositionally biased stretch (low complexity) spans 1112–1167; the sequence is SSSNLNNSSNNINNNNNNINNYNNNNNYNNNNNNNLNNNNNNNINSNLNNNLNNNN. Positions 1113–1150 form a coiled coil; sequence SSNLNNSSNNINNNNNNINNYNNNNNYNNNNNNNLNNN. Positions 1192–1204 are enriched in acidic residues; sequence TDISESSDSESDS. Composition is skewed to low complexity over residues 1205–1218 and 1231–1334; these read ESGS…YSDS and YNNS…SLTN. Residues 1280-1308 adopt a coiled-coil conformation; the sequence is NSNNNNSNNNNNNVNNNNNNHNNNNHNNN. The span at 1356 to 1369 shows a compositional bias: polar residues; the sequence is SVASWSFDPTNNKE. Residues 1370-1386 show a composition bias toward low complexity; sequence SSSSSSTSSTSSTSNTT. The span at 1387 to 1399 shows a compositional bias: polar residues; it reads LTPIIQQSSLTHA. Composition is skewed to low complexity over residues 1400–1424 and 1432–1451; these read SSPI…NNLS and NSPS…NTDS. Positions 1462–1544 form a coiled coil; it reads TLKQKEKERV…EKLNNSKGNM (83 aa). The span at 1480–1538 shows a compositional bias: basic and acidic residues; the sequence is EREEKEEELKKEEEKKRIEMEEIKRLAKEKEEREAEETRKQIESERAAAREAREKEKLN.

The protein is Bromodomain-containing protein DDB_G0270170 of Dictyostelium discoideum (Social amoeba).